Reading from the N-terminus, the 348-residue chain is MARDLIGPALPPGFKERATVEDQERDPSPVAGPALPPNYRSSSSDSSDSNEDSSSLSEEGNQESEEDDAGPTAKKQRRNQDRDDDDDDDGFFGPALPPGFKKQDDSPPRPIIGPALPPGFIKSPQKNDKGRENPGQVSPFFNSEEAESGEDEDIVGPMPAKGPVDYSVTAEFEKRAQRMKEKLTKGDDDSPKPVTRESWMTELPPEMKDFGLGPRTFKRRADDKSGDRSVWTDTPADRERKAKEIQEARKSLSKKDEENMLSGRDKRLAEQVSSYNESKRSESLMDIHHKRLKTKAAEDKNRHQERTPFDRDKDLKVNRFDEAQKKALIKKSRELNTRFSHGKGNMFL.

Disordered stretches follow at residues 1–163 (MARD…AKGP) and 177–317 (QRMK…DLKV). The residue at position 2 (Ala2) is an N-acetylalanine. Positions 7–12 (GPALPP) match the GPALPP motif 1 motif. A compositionally biased stretch (basic and acidic residues) spans 14 to 27 (FKERATVEDQERDP). Ser28 is subject to Phosphoserine. Positions 32–37 (GPALPP) match the GPALPP motif 2 motif. The span at 41–59 (SSSSDSSDSNEDSSSLSEE) shows a compositional bias: low complexity. The span at 60–69 (GNQESEEDDA) shows a compositional bias: acidic residues. Residues 93-98 (GPALPP) carry the GPALPP motif 3 motif. A Phosphoserine modification is found at Ser106. Pro residues predominate over residues 108 to 117 (PRPIIGPALP). Positions 113–118 (GPALPP) match the GPALPP motif 4 motif. Phosphoserine is present on residues Ser138, Ser143, and Ser148. Residues 144–154 (EEAESGEDEDI) are compositionally biased toward acidic residues. Composition is skewed to basic and acidic residues over residues 177-195 (QRMK…KPVT), 235-269 (PADR…KRLA), 277-287 (ESKRSESLMDI), and 295-317 (KAAE…DLKV). Glycyl lysine isopeptide (Lys-Gly) (interchain with G-Cter in SUMO2) cross-links involve residues Lys279 and Lys316.

The protein is GPALPP motifs-containing protein 1 (Gpalpp1) of Rattus norvegicus (Rat).